The sequence spans 282 residues: Urease accessory protein UreD (282 aa).

Belongs to the UreD family. As to quaternary structure, ureD, UreF and UreG form a complex that acts as a GTP-hydrolysis-dependent molecular chaperone, activating the urease apoprotein by helping to assemble the nickel containing metallocenter of UreC. The UreE protein probably delivers the nickel.

It is found in the cytoplasm. Required for maturation of urease via the functional incorporation of the urease nickel metallocenter. This Methylobacterium sp. (strain 4-46) protein is Urease accessory protein UreD.